Here is a 238-residue protein sequence, read N- to C-terminus: Ribonuclease PH (238 aa).

Residues Arg86 and 124–126 (GTR) each bind phosphate.

This sequence belongs to the RNase PH family. Homohexameric ring arranged as a trimer of dimers.

The enzyme catalyses tRNA(n+1) + phosphate = tRNA(n) + a ribonucleoside 5'-diphosphate. In terms of biological role, phosphorolytic 3'-5' exoribonuclease that plays an important role in tRNA 3'-end maturation. Removes nucleotide residues following the 3'-CCA terminus of tRNAs; can also add nucleotides to the ends of RNA molecules by using nucleoside diphosphates as substrates, but this may not be physiologically important. Probably plays a role in initiation of 16S rRNA degradation (leading to ribosome degradation) during starvation. The sequence is that of Ribonuclease PH from Dichelobacter nodosus (strain VCS1703A).